Here is a 159-residue protein sequence, read N- to C-terminus: Small ribosomal subunit protein uS7c (159 aa).

The segment at 137–159 (HAIRKKEETHKMAESNRAXAHYR) is disordered. Residues 141–150 (KKEETHKMAE) show a composition bias toward basic and acidic residues.

The protein belongs to the universal ribosomal protein uS7 family. In terms of assembly, part of the 30S ribosomal subunit.

It localises to the plastid. Its subcellular location is the chloroplast. In terms of biological role, one of the primary rRNA binding proteins, it binds directly to 16S rRNA where it nucleates assembly of the head domain of the 30S subunit. This chain is Small ribosomal subunit protein uS7c (rps7), found in Sciadopitys verticillata (Japanese umbrella-pine).